A 103-amino-acid polypeptide reads, in one-letter code: Cyanovirin-N homolog (103 aa).

It belongs to the cyanovirin-N family.

Mannose-binding lectin. This is Cyanovirin-N homolog from Tuber borchii (White truffle).